Consider the following 417-residue polypeptide: Argininosuccinate synthase (417 aa).

9–17 contributes to the ATP binding site; sequence AYSGGLDTS. Tyr-87 is a binding site for L-citrulline. Gly-117 contacts ATP. L-aspartate-binding residues include Thr-119, Asn-123, and Asp-124. Asn-123 lines the L-citrulline pocket. L-citrulline-binding residues include Arg-127, Ser-175, Ser-184, Glu-260, and Tyr-272.

The protein belongs to the argininosuccinate synthase family. Type 1 subfamily. As to quaternary structure, homotetramer.

The protein resides in the cytoplasm. It catalyses the reaction L-citrulline + L-aspartate + ATP = 2-(N(omega)-L-arginino)succinate + AMP + diphosphate + H(+). The protein operates within amino-acid biosynthesis; L-arginine biosynthesis; L-arginine from L-ornithine and carbamoyl phosphate: step 2/3. In Oceanobacillus iheyensis (strain DSM 14371 / CIP 107618 / JCM 11309 / KCTC 3954 / HTE831), this protein is Argininosuccinate synthase.